A 139-amino-acid polypeptide reads, in one-letter code: Transcription antitermination protein NusB (139 aa).

This sequence belongs to the NusB family.

In terms of biological role, involved in transcription antitermination. Required for transcription of ribosomal RNA (rRNA) genes. Binds specifically to the boxA antiterminator sequence of the ribosomal RNA (rrn) operons. The chain is Transcription antitermination protein NusB from Baumannia cicadellinicola subsp. Homalodisca coagulata.